The primary structure comprises 186 residues: MDVGQAVIFLGPPGAGKGTQASRLAQELGFKKLSTGDILRDHVARGTPLGERVRPIMERGDLVPDDLILELIREELAERVIFDGFPRTLAQAEALDRLLSETGTRLLGVVLVEVPEEELVRRILRRAELEGRSDDNEETVRRRLEVYREKTEPLVGYYEARGVLKRVDGLGTPDEVYARIRAALGI.

14–19 (GAGKGT) contributes to the ATP binding site. The NMP stretch occupies residues 34 to 63 (STGDILRDHVARGTPLGERVRPIMERGDLV). Residues Thr35, Arg40, 61 to 63 (DLV), 84 to 87 (GFPR), and Gln91 each bind AMP. Positions 125–135 (RRAELEGRSDD) are LID. Arg126 is an ATP binding site. AMP contacts are provided by Arg132 and Arg143. Gly171 contacts ATP.

It belongs to the adenylate kinase family. As to quaternary structure, monomer.

It is found in the cytoplasm. The catalysed reaction is AMP + ATP = 2 ADP. Its pathway is purine metabolism; AMP biosynthesis via salvage pathway; AMP from ADP: step 1/1. Catalyzes the reversible transfer of the terminal phosphate group between ATP and AMP. Plays an important role in cellular energy homeostasis and in adenine nucleotide metabolism. The sequence is that of Adenylate kinase from Thermus thermophilus (strain ATCC BAA-163 / DSM 7039 / HB27).